A 97-amino-acid polypeptide reads, in one-letter code: Scorpine-like peptide Ev37 (97 aa).

A signal peptide spans 1–19 (MNSKLTVIVLLALITIASC). In terms of domain architecture, BetaSPN-type CS-alpha/beta spans 55-95 (QNLCAFNVDTVGMCDADCKRQGKAKGVCHGTKCKCDVELSY). Disulfide bonds link cysteine 58-cysteine 82, cysteine 68-cysteine 87, and cysteine 72-cysteine 89.

The protein belongs to the long chain scorpion toxin family. Class 3 subfamily. As to expression, expressed by the venom gland.

The protein localises to the secreted. Its function is as follows. Selectively inhibits Kv1.3/KCNA3 channel (IC(50)=0.95 uM). Both N-terminal and C-terminal domains are likely involved in the interaction with Kv1.3/KCNA3, since neither its N-terminal domain (1-36) nor its C-terminal domain (37-78) block Kv1.3/KCNA3 channel. In Euscorpiops validus (Scorpion), this protein is Scorpine-like peptide Ev37.